We begin with the raw amino-acid sequence, 163 residues long: Ureidoglycolate lyase (163 aa).

This sequence belongs to the ureidoglycolate lyase family. In terms of assembly, homodimer. Ni(2+) is required as a cofactor.

It carries out the reaction (S)-ureidoglycolate = urea + glyoxylate. It functions in the pathway nitrogen metabolism; (S)-allantoin degradation. Functionally, catalyzes the catabolism of the allantoin degradation intermediate (S)-ureidoglycolate, generating urea and glyoxylate. Involved in the utilization of allantoin as nitrogen source. This Mesorhizobium japonicum (strain LMG 29417 / CECT 9101 / MAFF 303099) (Mesorhizobium loti (strain MAFF 303099)) protein is Ureidoglycolate lyase.